The primary structure comprises 427 residues: mRNA cap guanine-N(7) methyltransferase (427 aa).

The segment at 1 to 79 (MSLNYEQNAA…EPETEAASGA (79 aa)) is disordered. Phosphoserine occurs at positions 22, 24, 29, 46, and 48. Residues 44 to 57 (HVSKSPREYYDEPG) are compositionally biased toward basic and acidic residues. The mRNA cap 0 methyltransferase domain occupies 103–411 (SKIFFMRNFN…LYLVCAFKKC (309 aa)). 112 to 113 (NN) is a binding site for mRNA. S-adenosyl-L-methionine-binding residues include Lys-116, Cys-143, Asp-165, Asp-202, Gln-225, and Tyr-230.

Belongs to the class I-like SAM-binding methyltransferase superfamily. mRNA cap 0 methyltransferase family.

The protein localises to the nucleus. The catalysed reaction is a 5'-end (5'-triphosphoguanosine)-ribonucleoside in mRNA + S-adenosyl-L-methionine = a 5'-end (N(7)-methyl 5'-triphosphoguanosine)-ribonucleoside in mRNA + S-adenosyl-L-homocysteine. MRNA-capping methyltransferase that methylates the N7 position of the added guanosine to the 5'-cap structure of mRNAs. Binds RNA containing 5'-terminal GpppC. The polypeptide is mRNA cap guanine-N(7) methyltransferase (Drosophila melanogaster (Fruit fly)).